The chain runs to 468 residues: 3-isopropylmalate dehydratase large subunit (468 aa).

The interval 53–74 is disordered; that stretch reads QPSKTVATMDHNVPTDSRDLAG. Cys347, Cys407, and Cys410 together coordinate [4Fe-4S] cluster.

It belongs to the aconitase/IPM isomerase family. LeuC type 1 subfamily. In terms of assembly, heterodimer of LeuC and LeuD. [4Fe-4S] cluster serves as cofactor.

The enzyme catalyses (2R,3S)-3-isopropylmalate = (2S)-2-isopropylmalate. It functions in the pathway amino-acid biosynthesis; L-leucine biosynthesis; L-leucine from 3-methyl-2-oxobutanoate: step 2/4. Its function is as follows. Catalyzes the isomerization between 2-isopropylmalate and 3-isopropylmalate, via the formation of 2-isopropylmaleate. This chain is 3-isopropylmalate dehydratase large subunit, found in Pasteurella multocida (strain Pm70).